We begin with the raw amino-acid sequence, 249 residues long: Neurotrophic factor BDNF precursor form (249 aa).

The N-terminal stretch at 1 to 18 is a signal peptide; sequence MTILFLTMVISYFGCMKA. The propeptide occupies 19 to 130; sequence APMKEANVHG…AANMSMRVRR (112 aa). N123 carries an N-linked (GlcNAc...) asparagine glycan. Disulfide bonds link C143-C210, C188-C239, and C198-C241.

It belongs to the NGF-beta family. In terms of assembly, monomers and homodimers. Binds to NTRK2/TRKB. Can form heterodimers with other neurotrophin family members, such as NTF3 and NTF4 (in vitro), but the physiological relevance of this is not clear. BDNF precursor form: interacts with the heterodimer formed by NGFR and SORCS2. Mature BDNF has much lower affinity for the heterodimer formed by NGFR and SORCS2. N-glycosylated and glycosulfated, contrary to mature BDNF. In terms of processing, mature BDNF is produced by proteolytic removal of the propeptide, catalyzed by a FURIN family member. In addition, the precursor form is proteolytically cleaved within the propeptide, but this is not an obligatory intermediate for the production of mature BDNF. Can be converted into mature BDNF by plasmin (PLG).

It localises to the secreted. Functionally, important signaling molecule that activates signaling cascades downstream of NTRK2. During development, promotes the survival and differentiation of selected neuronal populations of the peripheral and central nervous systems. Participates in axonal growth, pathfinding and in the modulation of dendritic growth and morphology. Major regulator of synaptic transmission and plasticity at adult synapses in many regions of the CNS. The versatility of BDNF is emphasized by its contribution to a range of adaptive neuronal responses including long-term potentiation (LTP), long-term depression (LTD), certain forms of short-term synaptic plasticity, as well as homeostatic regulation of intrinsic neuronal excitability. Important signaling molecule that activates signaling cascades downstream of NTRK2. Activates signaling cascades via the heterodimeric receptor formed by NGFR and SORCS2. Signaling via NGFR and SORCS2 plays a role in synaptic plasticity and long-term depression (LTD). Binding to NGFR and SORCS2 promotes neuronal apoptosis. Promotes neuronal growth cone collapse. The protein is Neurotrophic factor BDNF precursor form (Bdnf) of Rattus norvegicus (Rat).